The following is a 2798-amino-acid chain: Nipped-B-like protein (2798 aa).

Polar residues-rich tracts occupy residues 128–173 and 191–208; these read LSQN…QNSP and HPSSYTTHPQMQQASVSS. A disordered region spans residues 128–338; sequence LSQNSMHSSP…IKLGKDEKDQ (211 aa). Residues Ser-150 and Ser-162 each carry the phosphoserine modification. The span at 234 to 249 shows a compositional bias: basic and acidic residues; the sequence is HHADNPRHGSSDDYLH. Residues Ser-243, Ser-256, Ser-274, Ser-280, Ser-284, Ser-301, Ser-306, Ser-318, and Ser-350 each carry the phosphoserine modification. The segment covering 482-500 has biased composition (basic and acidic residues); the sequence is RESAIERERFSKEVQDKDK. Residues 482–940 are disordered; the sequence is RESAIERERF…NKAEFPSYLL (459 aa). Positions 523–534 are enriched in polar residues; that stretch reads PASQETGSTGNG. Composition is skewed to basic and acidic residues over residues 562 to 572, 593 to 625, 634 to 663, 672 to 685, and 694 to 899; these read DSIKKPEETKQ, PENHPETPKKKSDPELSKSEMKQNESRLSESKP, KSNESKLETKTETPTEELKQNENKTTESKQ, KQNENRPCDTKPND, and ENTK…DTNK. Phosphothreonine is present on residues Thr-713 and Thr-746. Ser-906 carries the post-translational modification Phosphoserine. A compositionally biased stretch (basic and acidic residues) spans 908-933; that stretch reads NSKDDKRTEGNRSKVDSNKAHTDNKA. Positions 990-1003 match the PxVxL motif motif; that stretch reads NKGAKPVVVLQKLS. Disordered regions lie at residues 1011 to 1041 and 1054 to 1186; these read IKDREEKSRSSLKSIKNKPSKSNKGSIDQSV and ESTM…TPEE. At Lys-1076 the chain carries N6-acetyllysine. 3 positions are modified to phosphoserine: Ser-1083, Ser-1084, and Ser-1090. A compositionally biased stretch (acidic residues) spans 1083 to 1094; that stretch reads SSDEDNDSDEAF. The segment covering 1103–1133 has biased composition (basic and acidic residues); that stretch reads KDDDKAWEYEERDRRSSGDHRRSGHSHDGRR. Phosphoserine occurs at positions 1144, 1146, and 1148. Tyr-1153 is subject to Phosphotyrosine. A Phosphoserine modification is found at Ser-1154. The segment covering 1165-1176 has biased composition (basic residues); that stretch reads KMKKKEKQKKRK. A Phosphothreonine modification is found at Thr-1183. Position 1191 is a phosphoserine (Ser-1191). Residues 1685–1705 are compositionally biased toward basic and acidic residues; the sequence is AMKSQKDEESSDATHHAKELE. The disordered stretch occupies residues 1685–1706; it reads AMKSQKDEESSDATHHAKELET. 5 HEAT repeats span residues 1761–1799, 1837–1875, 1939–1978, 2221–2261, and 2307–2345; these read AQSFDIYLTQILRVLGENAIAVRTKAMKCLSEVVAVDPS, PQLAEQYYDMLIERILDTGISVRKRVIKILRDICIEQPT, YDWFEQLLQNLLKSEEDSSYKPVKKACTQLVDNLVEHILK, VNLK…LKEM, and LIHPVQCVPYLIAMGTDPEPAMRNKADQQLVEIDKKYAG. Positions 2467-2483 are enriched in basic and acidic residues; that stretch reads VKDKRKERKTSPAKENE. Disordered regions lie at residues 2467 to 2514 and 2645 to 2690; these read VKDK…DDIN and TSLL…DSTE. Ser-2487, Ser-2503, Ser-2505, Ser-2507, Ser-2509, Ser-2646, and Ser-2652 each carry phosphoserine. The segment covering 2504 to 2513 has biased composition (acidic residues); it reads ESDSDSEDDI. The residue at position 2661 (Thr-2661) is a Phosphothreonine. Ser-2666 bears the Phosphoserine mark.

It belongs to the SCC2/Nipped-B family. In terms of assembly, heterodimerizes with MAU2/SCC4 to form the cohesin loading complex. The NIPBL-MAU2 heterodimer interacts with the cohesin complex composed of SMC1A/B and SMC3 heterodimer, RAD21 and STAG1/SA1. NIPBL directly contacts all members of the complex, RAD21, SMC1A/B, SMC3 and STAG1. Interacts directly (via PxVxL motif) with CBX3 and CBX5. Interacts with ZNF609 (via N-terminus). Interacts with the multiprotein complex Integrator. Interacts with BRD4. In terms of tissue distribution, spermatocytes and oocytes (at protein level).

Its subcellular location is the nucleus. It localises to the chromosome. Plays an important role in the loading of the cohesin complex on to DNA. Forms a heterodimeric complex (also known as cohesin loading complex) with MAU2/SCC4 which mediates the loading of the cohesin complex onto chromatin. Plays a role in cohesin loading at sites of DNA damage. Its recruitment to double-strand breaks (DSBs) sites occurs in a CBX3-, RNF8- and RNF168-dependent manner whereas its recruitment to UV irradiation-induced DNA damage sites occurs in a ATM-, ATR-, RNF8- and RNF168-dependent manner. Along with ZNF609, promotes cortical neuron migration during brain development by regulating the transcription of crucial genes in this process. Preferentially binds promoters containing paused RNA polymerase II. Up-regulates the expression of SEMA3A, NRP1, PLXND1 and GABBR2 genes, among others. The protein is Nipped-B-like protein (Nipbl) of Mus musculus (Mouse).